We begin with the raw amino-acid sequence, 369 residues long: Tyrosyl-DNA phosphodiesterase 2 (369 aa).

Basic and acidic residues predominate over residues 1–17; sequence MELEARAEPRSPRAGRG. 2 disordered regions span residues 1-26 and 80-117; these read MELE…EDEE and AAAA…QQDD. Over residues 99–112 the composition is skewed to low complexity; it reads DDTASNTSSSGADS. The tract at residues 127–131 is interaction with 5' end of substrate DNA; that stretch reads NIDGL. Positions 129 and 159 each coordinate Mg(2+). The interval 233 to 238 is interaction with 5' end of substrate DNA; that stretch reads HLESTR. Residue D269 is the Proton donor/acceptor of the active site. The interaction with 5' end of substrate DNA stretch occupies residues 271 to 273; sequence NLR.

It belongs to the CCR4/nocturin family. TTRAP/TDP2 subfamily. Requires Mg(2+) as cofactor. Mn(2+) is required as a cofactor.

The protein resides in the nucleus. Its subcellular location is the PML body. Its function is as follows. DNA repair enzyme that can remove a variety of covalent adducts from DNA through hydrolysis of a 5'-phosphodiester bond, giving rise to DNA with a free 5' phosphate. Catalyzes the hydrolysis of dead-end complexes between DNA and the topoisomerase 2 (TOP2) active site tyrosine residue. Hydrolyzes 5'-phosphoglycolates on protruding 5' ends on DNA double-strand breaks (DSBs) due to DNA damage by radiation and free radicals. The 5'-tyrosyl DNA phosphodiesterase activity can enable the repair of TOP2-induced DSBs without the need for nuclease activity, creating a 'clean' DSB with 5'-phosphate termini that are ready for ligation. Also has 3'-tyrosyl DNA phosphodiesterase activity, but less efficiently and much slower than TDP1. In Gallus gallus (Chicken), this protein is Tyrosyl-DNA phosphodiesterase 2 (TDP2).